An 875-amino-acid chain; its full sequence is Serine/threonine-protein kinase D2 (875 aa).

Over residues methionine 1–proline 12 the composition is skewed to low complexity. Residues methionine 1 to leucine 35 are disordered. Residues serine 14 to leucine 35 are compositionally biased toward pro residues. Serine 30 carries the phosphoserine modification. Phosphotyrosine is present on tyrosine 87. A Phorbol-ester/DAG-type 1 zinc finger spans residues proline 138 to cysteine 188. Residues serine 197, serine 198, serine 200, serine 203, serine 206, serine 211, serine 212, and serine 214 each carry the phosphoserine modification. The segment at arginine 224–tyrosine 247 is disordered. Positions serine 236 to serine 245 are enriched in low complexity. Phosphoserine; by CSNK1D and CSNK1E is present on serine 244. A Phosphoserine modification is found at serine 245. A Phorbol-ester/DAG-type 2 zinc finger spans residues proline 265–cysteine 315. The segment at aspartate 332 to glutamine 374 is disordered. Positions threonine 398–methionine 510 constitute a PH domain. At tyrosine 408 the chain carries Phosphotyrosine. A Phosphotyrosine; by ABL1 modification is found at tyrosine 439. Residue serine 519 is modified to Phosphoserine. One can recognise a Protein kinase domain in the interval isoleucine 552 to leucine 808. ATP contacts are provided by residues leucine 558–valine 566 and lysine 581. Aspartate 675 serves as the catalytic Proton acceptor. Serine 707 bears the Phosphoserine; by PKC mark. Serine 711 is subject to Phosphoserine; by autocatalysis. At tyrosine 718 the chain carries Phosphotyrosine; by ABL1. Positions leucine 725–glutamine 727 match the Important for ABL1-mediated Tyr-718 phosphorylation motif. A Phosphoserine; by autocatalysis modification is found at serine 873.

The protein belongs to the protein kinase superfamily. CAMK Ser/Thr protein kinase family. PKD subfamily. In terms of assembly, interacts (via C-terminus) with LCK. Interacts (via N-terminus and zing-finger domain 1 and 2) with PRKCD in response to oxidative stress; the interaction is independent of PRKD2 tyrosine phosphorylation. Mg(2+) serves as cofactor. Post-translationally, phosphorylation of Ser-873 correlates with the activation status of the kinase. Ser-707 is probably phosphorylated by PKC. Phosphorylation at Ser-244 by CSNK1D and CSNK1E promotes nuclear localization and substrate targeting. Phosphorylation at Ser-244, Ser-707 and Ser-711 is required for nuclear localization. Phosphorylated at Tyr-438 by ABL1 in response to oxidative stress. Phosphorylated at Tyr-718 by ABL1 specifically in response to oxidative stress; requires prior phosphorylation at Ser-707 or/and Ser-711.

The protein resides in the cytoplasm. Its subcellular location is the cell membrane. It is found in the golgi apparatus. It localises to the trans-Golgi network. The enzyme catalyses L-seryl-[protein] + ATP = O-phospho-L-seryl-[protein] + ADP + H(+). It carries out the reaction L-threonyl-[protein] + ATP = O-phospho-L-threonyl-[protein] + ADP + H(+). With respect to regulation, activated by DAG and phorbol esters. Phorbol-ester/DAG-type domains bind DAG, mediating translocation to membranes. Autophosphorylation of Ser-711 and phosphorylation of Ser-707 by PKC relieves auto-inhibition by the PH domain. Catalytic activity is further increased by phosphorylation at Tyr-718 in response to oxidative stress. In terms of biological role, serine/threonine-protein kinase that converts transient diacylglycerol (DAG) signals into prolonged physiological effects downstream of PKC, and is involved in the regulation of cell proliferation via MAPK1/3 (ERK1/2) signaling, oxidative stress-induced NF-kappa-B activation, inhibition of HDAC7 transcriptional repression, signaling downstream of T-cell antigen receptor (TCR) and cytokine production, and plays a role in Golgi membrane trafficking, angiogenesis, secretory granule release and cell adhesion. May potentiate mitogenesis induced by the neuropeptide bombesin by mediating an increase in the duration of MAPK1/3 (ERK1/2) signaling, which leads to accumulation of immediate-early gene products including FOS that stimulate cell cycle progression. In response to oxidative stress, is phosphorylated at Tyr-438 and Tyr-718 by ABL1, which leads to the activation of PRKD2 without increasing its catalytic activity, and mediates activation of NF-kappa-B. In response to the activation of the gastrin receptor CCKBR, is phosphorylated at Ser-244 by CSNK1D and CSNK1E, translocates to the nucleus, phosphorylates HDAC7, leading to nuclear export of HDAC7 and inhibition of HDAC7 transcriptional repression of NR4A1/NUR77. Upon TCR stimulation, is activated independently of ZAP70, translocates from the cytoplasm to the nucleus and is required for interleukin-2 (IL2) promoter up-regulation. During adaptive immune responses, is required in peripheral T-lymphocytes for the production of the effector cytokines IL2 and IFNG after TCR engagement and for optimal induction of antibody responses to antigens. In epithelial cells stimulated with lysophosphatidic acid (LPA), is activated through a PKC-dependent pathway and mediates LPA-stimulated interleukin-8 (IL8) secretion via a NF-kappa-B-dependent pathway. During TCR-induced T-cell activation, interacts with and is activated by the tyrosine kinase LCK, which results in the activation of the NFAT transcription factors. In the trans-Golgi network (TGN), regulates the fission of transport vesicles that are on their way to the plasma membrane and in polarized cells is involved in the transport of proteins from the TGN to the basolateral membrane. Plays an important role in endothelial cell proliferation and migration prior to angiogenesis, partly through modulation of the expression of KDR/VEGFR2 and FGFR1, two key growth factor receptors involved in angiogenesis. In secretory pathway, is required for the release of chromogranin-A (CHGA)-containing secretory granules from the TGN. Downstream of PRKCA, plays important roles in angiotensin-2-induced monocyte adhesion to endothelial cells. The sequence is that of Serine/threonine-protein kinase D2 (Prkd2) from Mus musculus (Mouse).